The following is a 248-amino-acid chain: Mannose-binding protein C (248 aa).

The signal sequence occupies residues 1–20; sequence MSLFPSLPLLLLSMVAASYS. The 58-residue stretch at 42–99 folds into the Collagen-like domain; that stretch reads GINGFPGKDGRDGTKGEKGEPGQGLRGLQGPPGKLGPPGNPGPSGSPGPKGQKGDPGK. Residues 43-113 form a disordered region; that stretch reads INGFPGKDGR…DSSLAASERK (71 aa). Pro47 is modified (4-hydroxyproline). Residues 49–61 are compositionally biased toward basic and acidic residues; that stretch reads KDGRDGTKGEKGE. Residues Pro73, Pro79, Pro82, and Pro88 each carry the 4-hydroxyproline modification. Residues 75-87 are compositionally biased toward pro residues; it reads KLGPPGNPGPSGS. Residues 93–102 are compositionally biased toward basic and acidic residues; the sequence is QKGDPGKSPD. Positions 112–130 form a coiled coil; sequence RKALQTEMARIKKWLTFSL. Residues 134–245 form the C-type lectin domain; that stretch reads VGNKFFLTNG…CSTSHLAVCE (112 aa). 2 disulfides stabilise this stretch: Cys155–Cys244 and Cys222–Cys236.

As to quaternary structure, oligomeric complex of 3 or more homotrimers. Interacts with MASP1 and MASP2. Interacts with MEP1A and MEP1B and may inhibit their catalytic activity. Post-translationally, hydroxylation on proline residues within the sequence motif, GXPG, is most likely to be 4-hydroxy as this fits the requirement for 4-hydroxylation in vertebrates.

The protein localises to the secreted. In terms of biological role, calcium-dependent lectin involved in innate immune defense. Binds mannose, fucose and N-acetylglucosamine on different microorganisms and activates the lectin complement pathway. Binds to late apoptotic cells, as well as to apoptotic blebs and to necrotic cells, but not to early apoptotic cells, facilitating their uptake by macrophages. The sequence is that of Mannose-binding protein C (MBL2) from Gorilla gorilla gorilla (Western lowland gorilla).